Consider the following 463-residue polypeptide: L-seryl-tRNA(Sec) selenium transferase (463 aa).

Position 295 is an N6-(pyridoxal phosphate)lysine (Lys-295).

The protein belongs to the SelA family. In terms of assembly, homodecamer; pentamer of dimers. Binds only one seryl-tRNA(Sec) per dimer. It depends on pyridoxal 5'-phosphate as a cofactor.

It localises to the cytoplasm. It carries out the reaction L-seryl-tRNA(Sec) + selenophosphate + H(+) = L-selenocysteinyl-tRNA(Sec) + phosphate. Its pathway is aminoacyl-tRNA biosynthesis; selenocysteinyl-tRNA(Sec) biosynthesis; selenocysteinyl-tRNA(Sec) from L-seryl-tRNA(Sec) (bacterial route): step 1/1. Functionally, converts seryl-tRNA(Sec) to selenocysteinyl-tRNA(Sec) required for selenoprotein biosynthesis. This Salmonella arizonae (strain ATCC BAA-731 / CDC346-86 / RSK2980) protein is L-seryl-tRNA(Sec) selenium transferase.